Here is a 320-residue protein sequence, read N- to C-terminus: MDSFPVINMEKLEGQERAATMKLINDACENWGFFELVNHSIPVELMDEVERLTKEHYKKCMEQRFKELMASKVEGAVVDANDMDWESTFFIRHLPVSNLSEIPDLTDEHRKVMKEFAEKLEKLAEQVLDLLCENLGLEKGYLKMAFAGTTTGLPTFGTKVSNYPPCPRPELFKGLRAHTDAGGLILLFQDDRVAGLQLLKDGEWVDVPPMNHSIVINLGDQVEVITNGKYKSVMHRVVAQTDGNRMSLASFYNPGSDAVIFPAPALVEKEAEEKKEVYPKFVFEDYMNLYAGLKFQAKEPRFEVMKMKAVETANLSPITT.

The 101-residue stretch at 154 to 254 folds into the Fe2OG dioxygenase domain; that stretch reads PTFGTKVSNY…RMSLASFYNP (101 aa). Residues His-178, Asp-180, and His-235 each contribute to the Fe cation site.

It belongs to the iron/ascorbate-dependent oxidoreductase family. It depends on Fe cation as a cofactor.

It catalyses the reaction 1-aminocyclopropane-1-carboxylate + L-ascorbate + O2 = ethene + L-dehydroascorbate + hydrogen cyanide + CO2 + 2 H2O. It functions in the pathway alkene biosynthesis; ethylene biosynthesis via S-adenosyl-L-methionine; ethylene from S-adenosyl-L-methionine: step 2/2. This chain is 1-aminocyclopropane-1-carboxylate oxidase (ACO), found in Persea americana (Avocado).